The following is a 91-amino-acid chain: Large ribosomal subunit protein bL27 (91 aa).

The disordered stretch occupies residues 1–21 (MAHKKAGGSSRNGRDSESKRL).

The protein belongs to the bacterial ribosomal protein bL27 family.

The sequence is that of Large ribosomal subunit protein bL27 from Azoarcus sp. (strain BH72).